Here is a 1669-residue protein sequence, read N- to C-terminus: Collagen alpha-3(IV) chain (1669 aa).

The N-terminal stretch at 1–28 is a signal peptide; that stretch reads MHSKTAPRFLVFLLLTLLLLLAASPVAS. The tract at residues 29–42 is 7S domain; that stretch reads KGCVCKGKGQCLCA. The triple-helical region stretch occupies residues 43–1436; it reads GTKGEKGEKG…KGNPGDRGTP (1394 aa). Disordered stretches follow at residues 44–473 and 500–1439; these read TKGE…EPGS and PGGR…PATG. A compositionally biased stretch (low complexity) spans 54–68; the sequence is PGSPGFPGQKGFPGP. A compositionally biased stretch (pro residues) spans 105-114; the sequence is PGLPGLPGHP. Residue N126 is glycosylated (N-linked (GlcNAc...) asparagine). The span at 188-200 shows a compositional bias: pro residues; that stretch reads PGFPGPAGPPGPP. Positions 202–211 are enriched in low complexity; sequence FFGLPGAMGP. An N-linked (GlcNAc...) asparagine glycan is attached at N253. The span at 255–269 shows a compositional bias: basic and acidic residues; the sequence is SDFKGEKGDEGERGE. Low complexity-rich tracts occupy residues 279–290 and 382–393; these read PGDSYGSEKGAP and SPGLSRPGLRGP. Over residues 416–437 the composition is skewed to pro residues; it reads PPGPLGCPGSPGPPGPPGPPGC. Over residues 551-560 the composition is skewed to low complexity; that stretch reads NPGDPGLRGL. 2 stretches are compositionally biased toward pro residues: residues 596–617 and 654–665; these read PPGP…PPGY and LGPPGPPGPPGQ. Over residues 666-684 the composition is skewed to low complexity; the sequence is AGPRGLPGLPGPVGKCDPG. Residues 778 to 787 show a composition bias toward gly residues; the sequence is GTPGRGGLDG. Residues 830–832 carry the Cell attachment site motif; sequence RGD. Residues 861–876 are compositionally biased toward low complexity; sequence CPGEMGPPGQKGYPGA. Over residues 922 to 939 the composition is skewed to basic and acidic residues; sequence KGEKGRPGAKGERGEKGK. The segment covering 970–985 has biased composition (low complexity); that stretch reads RGNPGLPGPKGLEGLP. The Cell attachment site motif lies at 994 to 996; it reads RGD. Positions 1092–1103 are enriched in low complexity; the sequence is SGPAGPDGAPGS. Pro residues predominate over residues 1128–1146; the sequence is PGPPGSTGPPGPPGLPGLP. The Cell attachment site signature appears at 1152–1154; that stretch reads RGD. Residues 1228 to 1248 show a composition bias toward low complexity; sequence PGAIIPGPKGDRGLPGLRGNP. Residues 1250-1259 are compositionally biased toward pro residues; sequence EPGPPGPPGP. Positions 1304-1306 match the Cell attachment site motif; that stretch reads RGD. Pro residues predominate over residues 1333–1343; it reads PVGPKGPPGPR. 2 stretches are compositionally biased toward low complexity: residues 1366-1379 and 1402-1429; these read QPGM…LGLP and PAGT…LKGN. Residues 1425 to 1443 form an epitope recognized by Goodpasture antibodies region; sequence GLKGNPGDRGTPATGTRMR. The Collagen IV NC1 domain occupies 1444–1668; it reads GFIFTRHSQT…SRCQVCMKKR (225 aa). Disulfide bonds link C1459/C1550, C1492/C1547, C1504/C1510, C1569/C1664, C1603/C1661, and C1615/C1621. Residues 1478-1556 are required for the anti-angiogenic activity of tumstatin; it reads NKRAHGQDLG…CTVCEGPAMA (79 aa). M1532 participates in a covalent cross-link: S-Lysyl-methionine sulfilimine (Met-Lys) (interchain with K-1650). The interval 1609 to 1627 is required for the anti-tumor cell activity of tumstatin; it reads ASPFIECHGRGTCNYYSNS. An S-Lysyl-methionine sulfilimine (Lys-Met) (interchain with M-1532) cross-link involves residue K1650.

The protein belongs to the type IV collagen family. There are six type IV collagen isoforms, alpha 1(IV)-alpha 6(IV), each of which can form a triple helix structure with 2 other chains to generate type IV collagen network. The alpha 3(IV) chain forms a triple helical protomer with alpha 4(IV) and alpha 5(IV); this triple helical structure dimerizes through NC1-NC1 domain interactions such that the alpha 3(IV), alpha 4(IV) and alpha 5(IV) chains of one protomer connect with the alpha 5(IV), alpha 4(IV) and alpha 3(IV) chains of the opposite promoter, respectively. Interacts with ITGB3. Associates with LAMB2 at the neuromuscular junction and in GBM. In terms of processing, prolines at the third position of the tripeptide repeating unit (G-X-Y) are hydroxylated in some or all of the chains. Post-translationally, type IV collagens contain numerous cysteine residues which are involved in inter- and intramolecular disulfide bonding. 12 of these, located in the NC1 domain, are conserved in all known type IV collagens. The trimeric structure of the NC1 domains is stabilized by covalent bonds between Lys and Met residues. In terms of processing, phosphorylated. Thought to be phosphorylated by CERT, but CERT does not have kinase activity. In terms of tissue distribution, highly expressed in kidney and lung. Detected at lower levels in heart, muscle and skin.

It is found in the secreted. The protein localises to the extracellular space. The protein resides in the extracellular matrix. Its subcellular location is the basement membrane. Functionally, type IV collagen is the major structural component of glomerular basement membranes (GBM), forming a 'chicken-wire' meshwork together with laminins, proteoglycans and entactin/nidogen. In terms of biological role, tumstatin, a cleavage fragment corresponding to the collagen alpha 3(IV) NC1 domain, possesses both anti-angiogenic and anti-tumor cell activity; these two anti-tumor properties may be regulated via RGD-independent ITGB3-mediated mechanisms. This Mus musculus (Mouse) protein is Collagen alpha-3(IV) chain.